Consider the following 541-residue polypeptide: Membrane protein insertase YidC (541 aa).

5 consecutive transmembrane segments (helical) span residues 6 to 26 (NILLIGLLFVSFLLWQQWQAD), 349 to 369 (FVGNWGVAIILITLTVRGLLF), 420 to 440 (GGCLPILLQMPIFIALYWVLL), 457 to 477 (LSVQDPYYILPLLMGASMFVM), and 500 to 520 (MIFTVFFLWFPSGLVLYWLVG).

It belongs to the OXA1/ALB3/YidC family. Type 1 subfamily. In terms of assembly, interacts with the Sec translocase complex via SecD. Specifically interacts with transmembrane segments of nascent integral membrane proteins during membrane integration.

The protein localises to the cell inner membrane. Required for the insertion and/or proper folding and/or complex formation of integral membrane proteins into the membrane. Involved in integration of membrane proteins that insert both dependently and independently of the Sec translocase complex, as well as at least some lipoproteins. Aids folding of multispanning membrane proteins. The polypeptide is Membrane protein insertase YidC (Shewanella sp. (strain ANA-3)).